Here is a 94-residue protein sequence, read N- to C-terminus: Cystatin-A3 (94 aa).

The Secondary area of contact signature appears at 46–50 (QLVNG).

It belongs to the cystatin family.

Its subcellular location is the cytoplasm. Its function is as follows. Intracellular thiol proteinase inhibitor. This chain is Cystatin-A3 (cpiC), found in Dictyostelium discoideum (Social amoeba).